The sequence spans 78 residues: Large ribosomal subunit protein bL28 (78 aa).

It belongs to the bacterial ribosomal protein bL28 family.

The protein is Large ribosomal subunit protein bL28 of Azoarcus sp. (strain BH72).